Reading from the N-terminus, the 134-residue chain is Ribosome-binding factor A (134 aa).

Residues 115 to 134 form a disordered region; it reads EDQRQERGEIPPGSDELQPD.

Belongs to the RbfA family. Monomer. Binds 30S ribosomal subunits, but not 50S ribosomal subunits or 70S ribosomes.

The protein localises to the cytoplasm. In terms of biological role, one of several proteins that assist in the late maturation steps of the functional core of the 30S ribosomal subunit. Associates with free 30S ribosomal subunits (but not with 30S subunits that are part of 70S ribosomes or polysomes). Required for efficient processing of 16S rRNA. May interact with the 5'-terminal helix region of 16S rRNA. This chain is Ribosome-binding factor A, found in Synechococcus sp. (strain CC9902).